The following is a 994-amino-acid chain: Myosin IA heavy chain (994 aa).

The Myosin motor domain maps to Val-12–Asn-720. Residue Gly-105–Thr-112 participates in ATP binding. The tract at residues Thr-574–Phe-654 is actin-binding. IQ domains follow at residues Leu-723–Leu-744 and Arg-745–Ser-774. The 189-residue stretch at Arg-782–Ala-970 folds into the TH1 domain.

It belongs to the TRAFAC class myosin-kinesin ATPase superfamily. Myosin family. Myosin I heavy chain is single-headed. Dimer of a heavy and a light chain. Inability to self-assemble into filaments.

Actin-based motor protein, possibly involved in a wide range of motile processes, such as cell movement across a surface, and extension and retraction of pseudopodia or lamellipodia. The chain is Myosin IA heavy chain (myoA) from Dictyostelium discoideum (Social amoeba).